Here is a 282-residue protein sequence, read N- to C-terminus: MYGSCLLEKEAGMYPGTLRSPGGSSTAGVGTSGGSGSPLPASNFTAAPVYPHYVGYPHMSNMDPHGPSLGAWSSPYSPPREDWSTYPGPPSTMGTVPMNDMTSPVFGSPDYSTLGPTSGASNGGSLPDAASESLVSLDSGTSGATSPSRSRHSPYAWMRKTVQVTGKTRTKEKYRVVYTDHQRLELEKEFHCNRYITIRRKSELAVNLGLSERQVKIWFQNRRAKERKMIKKKISQFENTGGSVQSDSGSISPGELPNAFFTTPSAVRGFQPIEIQQVIVSE.

Disordered regions lie at residues 13 to 36 (MYPG…GGSG) and 98 to 156 (MNDM…SPYA). The segment covering 20–29 (SPGGSSTAGV) has biased composition (low complexity). Composition is skewed to polar residues over residues 110–124 (DYST…SNGG) and 133–148 (SLVS…TSPS). The segment at residues 171 to 230 (KEKYRVVYTDHQRLELEKEFHCNRYITIRRKSELAVNLGLSERQVKIWFQNRRAKERKMI) is a DNA-binding region (homeobox).

It belongs to the Caudal homeobox family.

The protein resides in the nucleus. The sequence is that of Homeobox protein CDX-4 (Cdx4) from Mus musculus (Mouse).